The sequence spans 382 residues: Guanine nucleotide-binding protein G(s) subunit alpha (382 aa).

Polar residues predominate over residues M1–V14. The disordered stretch occupies residues M1 to R31. A lipid anchor (N-palmitoyl glycine) is attached at G2. C3 is lipidated: S-palmitoyl cysteine. Over residues E17–R31 the composition is skewed to basic and acidic residues. Residues A42–L382 form the G-alpha domain. The interval R45–T58 is G1 motif. GTP-binding positions include G50–S57, A51–T58, L186–T192, D211–Q215, V212–R216, N280–D283, K281–L284, and A354. The Mg(2+) site is built by S57 and T192. Residues D184–T192 are G2 motif. Residues F207–R216 form a G3 motif region. Positions I276–D283 are G4 motif. Residues T352 to T357 are G5 motif.

Belongs to the G-alpha family. G(s) subfamily. As to quaternary structure, g proteins are composed of 3 units; alpha, beta and gamma. The alpha chain contains the guanine nucleotide binding site.

Guanine nucleotide-binding proteins (G proteins) are involved as modulators or transducers in various transmembrane signaling systems. The G(s) protein is involved in hormonal regulation of adenylate cyclase: it activates the cyclase. This is Guanine nucleotide-binding protein G(s) subunit alpha (G-salpha60A) from Drosophila pseudoobscura pseudoobscura (Fruit fly).